The chain runs to 256 residues: Indole-3-glycerol phosphate synthase (256 aa).

This sequence belongs to the TrpC family.

The enzyme catalyses 1-(2-carboxyphenylamino)-1-deoxy-D-ribulose 5-phosphate + H(+) = (1S,2R)-1-C-(indol-3-yl)glycerol 3-phosphate + CO2 + H2O. The protein operates within amino-acid biosynthesis; L-tryptophan biosynthesis; L-tryptophan from chorismate: step 4/5. This is Indole-3-glycerol phosphate synthase from Chlorobaculum tepidum (strain ATCC 49652 / DSM 12025 / NBRC 103806 / TLS) (Chlorobium tepidum).